Here is a 240-residue protein sequence, read N- to C-terminus: RNA-binding protein pno1 (240 aa).

The segment covering 1–15 has biased composition (basic and acidic residues); that stretch reads MEAENIRADAFEPAK. Residues 1–61 are disordered; that stretch reads MEAENIRADA…APPKAKRARS (61 aa). Positions 164–213 constitute a KH domain; sequence QSRAIGRLAGKGGRTKFTIENVTKTRIVLADSKIHILGSYQNIQLARRAV.

The protein belongs to the PNO1 family.

The protein resides in the nucleus. The protein localises to the nucleolus. In Drosophila melanogaster (Fruit fly), this protein is RNA-binding protein pno1 (l(1)G0004).